A 98-amino-acid chain; its full sequence is MNLKVLFLLAMVLVTLCLGEDRVTDRRKFCKCCASCCVSGRNIDGDCPPHGNQQFCHFCNREKVKIKRDCRSNQTAYQHCMEYHIQCASVKNHVCTDQ.

Positions 1–21 (MNLKVLFLLAMVLVTLCLGED) are cleaved as a signal peptide. A propeptide spanning residues 22–28 (RVTDRRK) is cleaved from the precursor.

This sequence belongs to the teretoxin C (TC) superfamily. Post-translationally, contains 6 disulfide bonds. Expressed by the venom duct.

The protein resides in the secreted. The sequence is that of Tan_12Cys from Terebra anilis (Auger snail).